The following is a 217-amino-acid chain: Thiamine-phosphate synthase (217 aa).

4-amino-2-methyl-5-(diphosphooxymethyl)pyrimidine-binding positions include 37–41 and asparagine 72; that span reads QFREK. Residues aspartate 73 and aspartate 92 each contribute to the Mg(2+) site. Serine 110 contacts 4-amino-2-methyl-5-(diphosphooxymethyl)pyrimidine. 136–138 is a 2-[(2R,5Z)-2-carboxy-4-methylthiazol-5(2H)-ylidene]ethyl phosphate binding site; the sequence is TVS. A 4-amino-2-methyl-5-(diphosphooxymethyl)pyrimidine-binding site is contributed by lysine 139. Residues glycine 168 and 188–189 contribute to the 2-[(2R,5Z)-2-carboxy-4-methylthiazol-5(2H)-ylidene]ethyl phosphate site; that span reads IS.

Belongs to the thiamine-phosphate synthase family. Mg(2+) is required as a cofactor.

The catalysed reaction is 2-[(2R,5Z)-2-carboxy-4-methylthiazol-5(2H)-ylidene]ethyl phosphate + 4-amino-2-methyl-5-(diphosphooxymethyl)pyrimidine + 2 H(+) = thiamine phosphate + CO2 + diphosphate. The enzyme catalyses 2-(2-carboxy-4-methylthiazol-5-yl)ethyl phosphate + 4-amino-2-methyl-5-(diphosphooxymethyl)pyrimidine + 2 H(+) = thiamine phosphate + CO2 + diphosphate. It catalyses the reaction 4-methyl-5-(2-phosphooxyethyl)-thiazole + 4-amino-2-methyl-5-(diphosphooxymethyl)pyrimidine + H(+) = thiamine phosphate + diphosphate. Its pathway is cofactor biosynthesis; thiamine diphosphate biosynthesis; thiamine phosphate from 4-amino-2-methyl-5-diphosphomethylpyrimidine and 4-methyl-5-(2-phosphoethyl)-thiazole: step 1/1. Condenses 4-methyl-5-(beta-hydroxyethyl)thiazole monophosphate (THZ-P) and 2-methyl-4-amino-5-hydroxymethyl pyrimidine pyrophosphate (HMP-PP) to form thiamine monophosphate (TMP). The sequence is that of Thiamine-phosphate synthase from Anoxybacillus flavithermus (strain DSM 21510 / WK1).